We begin with the raw amino-acid sequence, 110 residues long: Guanine nucleotide-binding protein subunit gamma (110 aa).

Cys106 carries S-palmitoyl cysteine lipidation. Cys107 carries the cysteine methyl ester modification. Cys107 carries S-farnesyl cysteine lipidation. The propeptide at 108-110 is removed in mature form; it reads TLM.

This sequence belongs to the G protein gamma family. G proteins are composed of 3 units, alpha, beta and gamma. The beta-gamma subunit complex (STE4-STE18 complex) interacts with PLP1 and PLP2.

It is found in the membrane. Implicated in the pheromone A- and alpha-factor response pathway. The beta and gamma chains of the putative yeast mating response pathway G protein play a positive role in initiation of the mating response. The sequence is that of Guanine nucleotide-binding protein subunit gamma (STE18) from Saccharomyces cerevisiae (strain ATCC 204508 / S288c) (Baker's yeast).